A 921-amino-acid chain; its full sequence is AdoMet-dependent rRNA methyltransferase SPB1 (921 aa).

G58, W60, D78, D94, and D119 together coordinate S-adenosyl-L-methionine. Residue K159 is the Proton acceptor of the active site. The stretch at 367–414 (VEEMDEDDQIDDELARLNEEAARKARKERRRKNELRQKKILKMQLQMT) forms a coiled coil. Disordered stretches follow at residues 448 to 476 (ALIQ…DPET), 491 to 604 (EFKQ…KRSL), 635 to 713 (ELDE…GKQK), 814 to 835 (LEKA…EKEK), and 866 to 921 (RGLK…GPRN). The segment covering 491-522 (EFKQKQSERDAKFRAKQARLQDAKNDSWHGIK) has biased composition (basic and acidic residues). Acidic residues-rich tracts occupy residues 523–542 (DDEE…ESEG), 555–568 (ETFD…EEDE), 635–684 (ELDE…DDFE), and 697–708 (DEEWDLNGEDEE). Residues 796–835 (IKKVAEAKARKKMRTLRRLEKAQKKAETINENEDISEKEK) are a coiled coil. Over residues 814–823 (LEKAQKKAET) the composition is skewed to basic and acidic residues. Basic residues predominate over residues 868 to 879 (LKGRPKGTKGRY). Basic and acidic residues predominate over residues 880–892 (KMVDPRMKKELRA).

The protein belongs to the class I-like SAM-binding methyltransferase superfamily. RNA methyltransferase RlmE family. SPB1 subfamily. In terms of assembly, component of the nucleolar and nucleoplasmic pre-60S ribosomal particle.

It localises to the nucleus. The protein resides in the nucleolus. The catalysed reaction is a ribonucleotide in rRNA + S-adenosyl-L-methionine = a 2'-O-methylribonucleotide in rRNA + S-adenosyl-L-homocysteine + H(+). Functionally, required for proper assembly of pre-ribosomal particles during the biogenesis of the 60S ribosomal subunit. This chain is AdoMet-dependent rRNA methyltransferase SPB1, found in Mycosarcoma maydis (Corn smut fungus).